A 342-amino-acid polypeptide reads, in one-letter code: Ribosomal RNA small subunit methyltransferase C (342 aa).

Belongs to the methyltransferase superfamily. RsmC family. In terms of assembly, monomer.

It is found in the cytoplasm. The catalysed reaction is guanosine(1207) in 16S rRNA + S-adenosyl-L-methionine = N(2)-methylguanosine(1207) in 16S rRNA + S-adenosyl-L-homocysteine + H(+). Functionally, specifically methylates the guanine in position 1207 of 16S rRNA in the 30S particle. This Salmonella heidelberg (strain SL476) protein is Ribosomal RNA small subunit methyltransferase C.